The primary structure comprises 249 residues: Leucyl/phenylalanyl-tRNA--protein transferase (249 aa).

This sequence belongs to the L/F-transferase family.

Its subcellular location is the cytoplasm. It catalyses the reaction N-terminal L-lysyl-[protein] + L-leucyl-tRNA(Leu) = N-terminal L-leucyl-L-lysyl-[protein] + tRNA(Leu) + H(+). It carries out the reaction N-terminal L-arginyl-[protein] + L-leucyl-tRNA(Leu) = N-terminal L-leucyl-L-arginyl-[protein] + tRNA(Leu) + H(+). The enzyme catalyses L-phenylalanyl-tRNA(Phe) + an N-terminal L-alpha-aminoacyl-[protein] = an N-terminal L-phenylalanyl-L-alpha-aminoacyl-[protein] + tRNA(Phe). In terms of biological role, functions in the N-end rule pathway of protein degradation where it conjugates Leu, Phe and, less efficiently, Met from aminoacyl-tRNAs to the N-termini of proteins containing an N-terminal arginine or lysine. This is Leucyl/phenylalanyl-tRNA--protein transferase from Cupriavidus metallidurans (strain ATCC 43123 / DSM 2839 / NBRC 102507 / CH34) (Ralstonia metallidurans).